Reading from the N-terminus, the 202-residue chain is NADH-quinone oxidoreductase subunit C (202 aa).

This sequence belongs to the complex I 30 kDa subunit family. NDH-1 is composed of 14 different subunits. Subunits NuoB, C, D, E, F, and G constitute the peripheral sector of the complex.

The protein resides in the cell inner membrane. The catalysed reaction is a quinone + NADH + 5 H(+)(in) = a quinol + NAD(+) + 4 H(+)(out). In terms of biological role, NDH-1 shuttles electrons from NADH, via FMN and iron-sulfur (Fe-S) centers, to quinones in the respiratory chain. The immediate electron acceptor for the enzyme in this species is believed to be ubiquinone. Couples the redox reaction to proton translocation (for every two electrons transferred, four hydrogen ions are translocated across the cytoplasmic membrane), and thus conserves the redox energy in a proton gradient. This Bartonella henselae (strain ATCC 49882 / DSM 28221 / CCUG 30454 / Houston 1) (Rochalimaea henselae) protein is NADH-quinone oxidoreductase subunit C.